A 206-amino-acid chain; its full sequence is Large ribosomal subunit protein uL4 (206 aa).

The disordered stretch occupies residues 48 to 97 (THAVKNRSLVSGGGKKPWKQKHTGRARQGSTRASQWVGGGKAMGPKPRDY). Residues 63-72 (KPWKQKHTGR) are compositionally biased toward basic residues.

It belongs to the universal ribosomal protein uL4 family. As to quaternary structure, part of the 50S ribosomal subunit.

In terms of biological role, one of the primary rRNA binding proteins, this protein initially binds near the 5'-end of the 23S rRNA. It is important during the early stages of 50S assembly. It makes multiple contacts with different domains of the 23S rRNA in the assembled 50S subunit and ribosome. Functionally, forms part of the polypeptide exit tunnel. The chain is Large ribosomal subunit protein uL4 from Anaeromyxobacter dehalogenans (strain 2CP-C).